Here is a 527-residue protein sequence, read N- to C-terminus: Phosphoenolpyruvate carboxykinase (ATP) (527 aa).

Positions 55, 191, and 197 each coordinate substrate. Residues Lys-197, His-216, and 232-240 (GLSGTGKTT) each bind ATP. Mn(2+)-binding residues include Lys-197 and His-216. Asp-253 is a Mn(2+) binding site. Positions 281, 318, and 443 each coordinate ATP. Arg-318 provides a ligand contact to substrate.

Belongs to the phosphoenolpyruvate carboxykinase (ATP) family. Mn(2+) serves as cofactor.

Its subcellular location is the cytoplasm. The enzyme catalyses oxaloacetate + ATP = phosphoenolpyruvate + ADP + CO2. Its pathway is carbohydrate biosynthesis; gluconeogenesis. In terms of biological role, involved in the gluconeogenesis. Catalyzes the conversion of oxaloacetate (OAA) to phosphoenolpyruvate (PEP) through direct phosphoryl transfer between the nucleoside triphosphate and OAA. This Brevibacillus brevis (strain 47 / JCM 6285 / NBRC 100599) protein is Phosphoenolpyruvate carboxykinase (ATP).